The primary structure comprises 786 residues: Endonuclease MutS2 (786 aa).

Residue 335-342 participates in ATP binding; the sequence is GPNTGGKT. The 76-residue stretch at 711–786 folds into the Smr domain; it reads LDLRGERFEN…GLGVTVVELK (76 aa).

Belongs to the DNA mismatch repair MutS family. MutS2 subfamily. As to quaternary structure, homodimer. Binds to stalled ribosomes, contacting rRNA.

Its function is as follows. Endonuclease that is involved in the suppression of homologous recombination and thus may have a key role in the control of bacterial genetic diversity. In terms of biological role, acts as a ribosome collision sensor, splitting the ribosome into its 2 subunits. Detects stalled/collided 70S ribosomes which it binds and splits by an ATP-hydrolysis driven conformational change. Acts upstream of the ribosome quality control system (RQC), a ribosome-associated complex that mediates the extraction of incompletely synthesized nascent chains from stalled ribosomes and their subsequent degradation. Probably generates substrates for RQC. The sequence is that of Endonuclease MutS2 from Bacillus thuringiensis (strain Al Hakam).